A 223-amino-acid chain; its full sequence is Small ribosomal subunit protein uS3 (223 aa).

Positions 40 to 108 (IRELVHRELP…KVHLNIQEIR (69 aa)) constitute a KH type-2 domain.

It belongs to the universal ribosomal protein uS3 family. As to quaternary structure, part of the 30S ribosomal subunit. Forms a tight complex with proteins S10 and S14.

Binds the lower part of the 30S subunit head. Binds mRNA in the 70S ribosome, positioning it for translation. The sequence is that of Small ribosomal subunit protein uS3 from Thermomicrobium roseum (strain ATCC 27502 / DSM 5159 / P-2).